Here is a 314-residue protein sequence, read N- to C-terminus: Cytochrome f (314 aa).

The first 29 residues, Met1–Ala29, serve as a signal peptide directing secretion. Heme is bound by residues Tyr30, Cys50, Cys53, and His54. A helical transmembrane segment spans residues Val280–Lys300.

The protein belongs to the cytochrome f family. In terms of assembly, the 4 large subunits of the cytochrome b6-f complex are cytochrome b6, subunit IV (17 kDa polypeptide, petD), cytochrome f and the Rieske protein, while the 4 small subunits are PetG, PetL, PetM and PetN. The complex functions as a dimer. It depends on heme as a cofactor.

It localises to the plastid. Its subcellular location is the chloroplast thylakoid membrane. Its function is as follows. Component of the cytochrome b6-f complex, which mediates electron transfer between photosystem II (PSII) and photosystem I (PSI), cyclic electron flow around PSI, and state transitions. The chain is Cytochrome f from Illicium oligandrum (Star anise).